Here is a 393-residue protein sequence, read N- to C-terminus: Myb-related transcription factor, partner of profilin (393 aa).

Residues 1–11 (MASATAAAAPG) show a composition bias toward low complexity. The interval 1–21 (MASATAAAAPGEAEETTRLRK) is disordered. The region spanning 16 to 88 (TTRLRKPRFS…EVQKRWNDFK (73 aa)) is the Myb-like domain. Residues 87–90 (FKRR) carry the Nuclear localization signal motif. 3 disordered regions span residues 125–254 (GPGV…EQSL), 290–323 (PLLP…APKV), and 348–393 (IISP…WKSP). Over residues 142–157 (AAASSQPQASTASTQR) the composition is skewed to low complexity. Residues 160 to 171 (LSEDRRQDRRAD) show a composition bias toward basic and acidic residues. Residues 173-184 (PAQSKGGSSSPE) show a composition bias toward polar residues. Composition is skewed to pro residues over residues 219-229 (PPLPAPPPPPT), 238-247 (SPSPTPPRPT), 296-320 (PADP…PPSA), and 359-368 (KPLPPAPPLP). Residues 375–393 (HKRRKGFPTRKRRGRWKSP) show a composition bias toward basic residues. Short sequence motifs (nuclear localization signal) lie at residues 376-379 (KRRK) and 384-387 (RKRR).

As to quaternary structure, interacts with PFN1. Homodimer and heterodimer with PFN1. In terms of tissue distribution, ubiquitous. Highly expressed in brain, liver and testis. Moderate expression in heart, lung and skeletal muscle. Low expression in spleen and kidney.

It is found in the nucleus. In terms of biological role, transcriptional repressor; DNA-binding protein that specifically recognizes the core sequence 5'-YAAC[GT]G-3'. Dimerization with PFN1 reduces its DNA-binding capacity. The sequence is that of Myb-related transcription factor, partner of profilin (Mypop) from Mus musculus (Mouse).